The chain runs to 324 residues: Nucleotide-binding protein GbCGDNIH1_0395 (324 aa).

ATP is bound at residue 14-21; that stretch reads GLSGAGKS. Position 59-62 (59-62) interacts with GTP; sequence DARS. Residues 286–324 form a disordered region; sequence ISDDAPQAGAARVSTDDRNGRPEEHGSAQAPDELSRTTS. Basic and acidic residues predominate over residues 299 to 311; sequence STDDRNGRPEEHG.

It belongs to the RapZ-like family.

Its function is as follows. Displays ATPase and GTPase activities. The sequence is that of Nucleotide-binding protein GbCGDNIH1_0395 from Granulibacter bethesdensis (strain ATCC BAA-1260 / CGDNIH1).